The sequence spans 132 residues: Small ribosomal subunit protein uS12 (132 aa).

Residue Asp89 is modified to 3-methylthioaspartic acid. Residues 101–132 (TLDASGAAGPSSTNKATRNRKRSKYGVKRPKA) form a disordered region. Residues 117-132 (TRNRKRSKYGVKRPKA) show a composition bias toward basic residues.

This sequence belongs to the universal ribosomal protein uS12 family. In terms of assembly, part of the 30S ribosomal subunit. Contacts proteins S8 and S17. May interact with IF1 in the 30S initiation complex.

With S4 and S5 plays an important role in translational accuracy. Its function is as follows. Interacts with and stabilizes bases of the 16S rRNA that are involved in tRNA selection in the A site and with the mRNA backbone. Located at the interface of the 30S and 50S subunits, it traverses the body of the 30S subunit contacting proteins on the other side and probably holding the rRNA structure together. The combined cluster of proteins S8, S12 and S17 appears to hold together the shoulder and platform of the 30S subunit. This is Small ribosomal subunit protein uS12 from Sorangium cellulosum (strain So ce56) (Polyangium cellulosum (strain So ce56)).